The chain runs to 1455 residues: DNA-directed RNA polymerase subunit beta (1455 aa).

Belongs to the RNA polymerase beta chain family. In terms of assembly, the RNAP catalytic core consists of 2 alpha, 1 beta, 1 beta' and 1 omega subunit. When a sigma factor is associated with the core the holoenzyme is formed, which can initiate transcription.

It carries out the reaction RNA(n) + a ribonucleoside 5'-triphosphate = RNA(n+1) + diphosphate. Functionally, DNA-dependent RNA polymerase catalyzes the transcription of DNA into RNA using the four ribonucleoside triphosphates as substrates. The sequence is that of DNA-directed RNA polymerase subunit beta from Rhizorhabdus wittichii (strain DSM 6014 / CCUG 31198 / JCM 15750 / NBRC 105917 / EY 4224 / RW1) (Sphingomonas wittichii).